Reading from the N-terminus, the 262-residue chain is Nurim (262 aa).

Residues Met1–Ala4 are Nuclear-facing. A helical transmembrane segment spans residues Leu5–Phe28. At Thr29–Ser58 the chain is on the perinuclear space side. The chain crosses the membrane as a helical span at residues Ile59 to Met80. The Nuclear portion of the chain corresponds to Ala81–Gln97. A helical membrane pass occupies residues Arg98 to Arg114. At Tyr115 to Trp133 the chain is on the perinuclear space side. A helical membrane pass occupies residues Ala134–Leu164. Topologically, residues Met165–Leu191 are nuclear. A helical transmembrane segment spans residues Phe192 to Val210. Topologically, residues Pro211–Asp216 are perinuclear space. A helical transmembrane segment spans residues Arg217–Leu234. The Nuclear segment spans residues Asp235–Glu262.

It belongs to the nurim family.

It localises to the nucleus inner membrane. This is Nurim (NRM) from Bos taurus (Bovine).